The chain runs to 334 residues: Ethanol acetyltransferase 1 (334 aa).

The transit peptide at 1-16 (MFASNVVVLNKRSIRF) directs the protein to the mitochondrion. Active-site charge relay system residues include S124, D148, and H296.

It belongs to the AB hydrolase superfamily.

The protein localises to the mitochondrion. It catalyses the reaction ethanol + acetyl-CoA = ethyl acetate + CoA. The catalysed reaction is acetyl-CoA + H2O = acetate + CoA + H(+). It carries out the reaction ethyl acetate + H2O = ethanol + acetate + H(+). In terms of biological role, alcohol acetyltransferase that catalyzes the synthesis of ethyl acetate from ethanol and acetyl-CoA. Can also function as a thioesterase by hydrolyzing acetyl-CoA in the absence of ethanol, as well as esterase hydrolyzing ethyl acetate. The chain is Ethanol acetyltransferase 1 (EAT1) from Hanseniaspora uvarum (Yeast).